The primary structure comprises 310 residues: Transcription initiation factor TFIID subunit 8 (310 aa).

The disordered stretch occupies residues 1–30 (MADAAATAGAGGSGTRSGSKQSTNPADNYH). The residue at position 2 (Ala-2) is an N-acetylalanine. In terms of domain architecture, Histone-fold; involved in forming hexamer structure in TFIID complex spans 35–102 (RTLQVVVSSL…IVVTLVEMGF (68 aa)). Residue Thr-130 is modified to Phosphothreonine. Residues 262 to 310 (DSGAEKENTSVLQQNPSLSGSRNGEENIIDNPYLRPVKKPKIRRKKSLS) form a disordered region. Residues 270–283 (TSVLQQNPSLSGSR) are compositionally biased toward polar residues. Phosphoserine is present on Ser-271. Positions 294 to 307 (YLRPVKKPKIRRKK) match the Nuclear localization signal motif. Positions 297–310 (PVKKPKIRRKKSLS) are enriched in basic residues.

This sequence belongs to the TAF8 family. Component of the TFIID basal transcription factor complex, composed of TATA-box-binding protein TBP, and a number of TBP-associated factors (TAFs), including TAF1, TAF2, TAF3, TAF4, TAF5, TAF6, TAF7, TAF8, TAF9, TAF10, TAF11, TAF12 and TAF13. Interacts with TBP, TAF1, TAF6, TAF10, TAF11 and TAF13. Component also of a small TAF complex (SMAT) containing TAF8, TAF10 and SUPT7L. Forms a heterodimer with TAF10. Interaction with TAF10 is mediated mainly via its histone fold domain while interaction with SUPT7L is via its C-terminal region.

Its subcellular location is the nucleus. The protein resides in the cytoplasm. Functionally, the TFIID basal transcription factor complex plays a major role in the initiation of RNA polymerase II (Pol II)-dependent transcription. TFIID recognizes and binds promoters with or without a TATA box via its subunit TBP, a TATA-box-binding protein, and promotes assembly of the pre-initiation complex (PIC). The TFIID complex consists of TBP and TBP-associated factors (TAFs), including TAF1, TAF2, TAF3, TAF4, TAF5, TAF6, TAF7, TAF8, TAF9, TAF10, TAF11, TAF12 and TAF13. The TFIID complex structure can be divided into 3 modules TFIID-A, TFIID-B, and TFIID-C. TAF8 is involved in forming the TFIID-B module, together with TAF5. Mediates both basal and activator-dependent transcription. Plays a role in the differentiation of preadipocyte fibroblasts to adipocytes, however, does not seem to play a role in differentiation of myoblasts. Required for the integration of TAF10 in the TAF complex. May be important for survival of cells of the inner cell mass which constitute the pluripotent cell population of the early embryo. The sequence is that of Transcription initiation factor TFIID subunit 8 (TAF8) from Homo sapiens (Human).